We begin with the raw amino-acid sequence, 158 residues long: MPHLTHFDTAGQAHMVDVGDKAVTHRVAVATGLIHMLPTTFALVRDGTAKKGDVLGIARIAAIQGAKRTSDLIPLCHPLALTKVAVDFELDEADRTVRCTVRAETHGQTGVEMEALTAVQVGLLTIYDMCKAVDRGMVIGDVRLMEKRGGKSGEWVAQ.

Substrate is bound by residues 75–77 (LCH) and 113–114 (ME). Residue D128 is part of the active site.

It belongs to the MoaC family. Homohexamer; trimer of dimers.

It carries out the reaction (8S)-3',8-cyclo-7,8-dihydroguanosine 5'-triphosphate = cyclic pyranopterin phosphate + diphosphate. The protein operates within cofactor biosynthesis; molybdopterin biosynthesis. Its function is as follows. Catalyzes the conversion of (8S)-3',8-cyclo-7,8-dihydroguanosine 5'-triphosphate to cyclic pyranopterin monophosphate (cPMP). This Ralstonia nicotianae (strain ATCC BAA-1114 / GMI1000) (Ralstonia solanacearum) protein is Cyclic pyranopterin monophosphate synthase.